A 735-amino-acid polypeptide reads, in one-letter code: Diacylglycerol kinase alpha (735 aa).

EF-hand domains follow at residues 110-145 (RPED…MMRV) and 155-190 (ELRP…TVPL). Ca(2+)-binding residues include D123, D125, N127, E134, D168, D170, S172, S174, and E179. 2 Phorbol-ester/DAG-type zinc fingers span residues 205–253 (QHMW…ALPC) and 269–319 (SHVW…GHEC). Residues 372 to 506 (PNTHPLLVFV…MDRWSVEVIP (135 aa)) enclose the DAGKc domain. K484 is modified (N6-acetyllysine).

This sequence belongs to the eukaryotic diacylglycerol kinase family. As to quaternary structure, monomer. In terms of tissue distribution, expressed in lymphocytes.

It localises to the cytoplasm. It is found in the cytosol. It catalyses the reaction a 1,2-diacyl-sn-glycerol + ATP = a 1,2-diacyl-sn-glycero-3-phosphate + ADP + H(+). The enzyme catalyses a 1-O-alkyl-sn-glycerol + ATP = a 1-O-alkyl-sn-glycero-3-phosphate + ADP + H(+). It carries out the reaction 1-O-alkyl-2-acyl-sn-glycerol + ATP = 1-O-alkyl-2-acyl-sn-glycero-3-phosphate + ADP + H(+). The catalysed reaction is 1,2-dihexadecanoyl-sn-glycerol + ATP = 1,2-dihexadecanoyl-sn-glycero-3-phosphate + ADP + H(+). It catalyses the reaction 1-hexadecanoyl-2-(9Z-octadecenoyl)-sn-glycerol + ATP = 1-hexadecanoyl-2-(9Z-octadecenoyl)-sn-glycero-3-phosphate + ADP + H(+). The enzyme catalyses 2-(9Z-octadecenoyl)-glycerol + ATP = 2-(9Z-octadecenoyl)-sn-glycero-3-phosphate + ADP + H(+). It carries out the reaction 1,2-di-(9Z-octadecenoyl)-sn-glycerol + ATP = 1,2-di-(9Z-octadecenoyl)-sn-glycero-3-phosphate + ADP + H(+). The catalysed reaction is 1-octadecanoyl-2-(5Z,8Z,11Z,14Z-eicosatetraenoyl)-sn-glycerol + ATP = 1-octadecanoyl-2-(5Z,8Z,11Z,14Z-eicosatetraenoyl)-sn-glycero-3-phosphate + ADP + H(+). It catalyses the reaction 1,2-didecanoyl-sn-glycerol + ATP = 1,2-didecanoyl-sn-glycero-3-phosphate + ADP + H(+). The enzyme catalyses 1-O-hexadecyl-2-acetyl-sn-glycerol + ATP = 1-O-hexadecyl-2-acetyl-sn-glycero-3-phosphate + ADP + H(+). It carries out the reaction 1-O-hexadecyl-2-(5Z,8Z,11Z,14Z-eicosatetraenoyl)-sn-glycerol + ATP = 1-O-hexadecyl-2-(5Z,8Z,11Z,14Z-eicosatetraenoyl)-sn-glycero-3-phosphate + ADP + H(+). The catalysed reaction is 1-O-hexadecyl-2-(9Z-octadecenoyl)-sn-glycerol + ATP = 1-O-hexadecyl-2-(9Z-octadecenoyl)-sn-glycero-3-phosphate + ADP + H(+). It catalyses the reaction 1-O-hexadecyl-sn-glycerol + ATP = 1-O-hexadecyl-sn-glycero-3-phosphate + ADP + H(+). Its pathway is lipid metabolism; glycerolipid metabolism. Its activity is regulated as follows. Stimulated by calcium and phosphatidylserine. Its function is as follows. Diacylglycerol kinase that converts diacylglycerol/DAG into phosphatidic acid/phosphatidate/PA and regulates the respective levels of these two bioactive lipids. Thereby, acts as a central switch between the signaling pathways activated by these second messengers with different cellular targets and opposite effects in numerous biological processes. Also plays an important role in the biosynthesis of complex lipids. Can also phosphorylate 1-alkyl-2-acylglycerol in vitro as efficiently as diacylglycerol provided it contains an arachidonoyl group. Also involved in the production of alkyl-lysophosphatidic acid, another bioactive lipid, through the phosphorylation of 1-alkyl-2-acetyl glycerol. The polypeptide is Diacylglycerol kinase alpha (DGKA) (Homo sapiens (Human)).